We begin with the raw amino-acid sequence, 640 residues long: 1,4-alpha-glucan branching enzyme GlgB (640 aa).

Aspartate 318 acts as the Nucleophile in catalysis. The Proton donor role is filled by glutamate 371.

The protein belongs to the glycosyl hydrolase 13 family. GlgB subfamily. As to quaternary structure, monomer.

The enzyme catalyses Transfers a segment of a (1-&gt;4)-alpha-D-glucan chain to a primary hydroxy group in a similar glucan chain.. It participates in glycan biosynthesis; glycogen biosynthesis. Catalyzes the formation of the alpha-1,6-glucosidic linkages in glycogen by scission of a 1,4-alpha-linked oligosaccharide from growing alpha-1,4-glucan chains and the subsequent attachment of the oligosaccharide to the alpha-1,6 position. The sequence is that of 1,4-alpha-glucan branching enzyme GlgB from Francisella tularensis subsp. tularensis (strain FSC 198).